Here is a 242-residue protein sequence, read N- to C-terminus: Sugar fermentation stimulation protein homolog (242 aa).

Belongs to the SfsA family.

In Enterococcus mundtii, this protein is Sugar fermentation stimulation protein homolog.